Reading from the N-terminus, the 125-residue chain is Small ribosomal subunit protein eS8 (125 aa).

It belongs to the eukaryotic ribosomal protein eS8 family. Part of the 30S ribosomal subunit.

The sequence is that of Small ribosomal subunit protein eS8 from Methanocella arvoryzae (strain DSM 22066 / NBRC 105507 / MRE50).